The following is a 446-amino-acid chain: Phosphoglucosamine mutase (446 aa).

S101 acts as the Phosphoserine intermediate in catalysis. The Mg(2+) site is built by S101, D240, D242, and D244. A Phosphoserine modification is found at S101.

It belongs to the phosphohexose mutase family. Mg(2+) serves as cofactor. Activated by phosphorylation.

It catalyses the reaction alpha-D-glucosamine 1-phosphate = D-glucosamine 6-phosphate. Catalyzes the conversion of glucosamine-6-phosphate to glucosamine-1-phosphate. The sequence is that of Phosphoglucosamine mutase from Pseudomonas entomophila (strain L48).